The chain runs to 363 residues: UV excision repair protein RAD23 homolog A (363 aa).

In terms of domain architecture, Ubiquitin-like spans M1–A81. The segment at A81–G160 is disordered. The segment covering T85–F103 has biased composition (low complexity). Residue K122 forms a Glycyl lysine isopeptide (Lys-Gly) (interchain with G-Cter in ubiquitin) linkage. Residues S123, S128, S133, S136, and S138 each carry the phosphoserine modification. The span at E126 to S147 shows a compositional bias: low complexity. A UBA 1 domain is found at S161 to G201. The tract at residues P203 to A227 is disordered. At S205 the chain carries Phosphoserine. A compositionally biased stretch (polar residues) spans V213 to P222. Residues S295 and S357 each carry the phosphoserine modification. The UBA 2 domain occupies P318–Q358. An HIV-1 vpr binding region spans residues Q319–E363.

The protein belongs to the RAD23 family. As to quaternary structure, interacts with XPC; the interaction is suggesting the existence of a functional equivalent variant XPC complex. Interacts with PSMD4 and PSMC5. Interacts with ATXN3. Interacts with UBQLN2. (Microbial infection) Interacts with HIV-1 Vpr.

It localises to the nucleus. Its function is as follows. Multiubiquitin chain receptor involved in modulation of proteasomal degradation. Binds to 'Lys-48'-linked polyubiquitin chains in a length-dependent manner and with a lower affinity to 'Lys-63'-linked polyubiquitin chains. Proposed to be capable to bind simultaneously to the 26S proteasome and to polyubiquitinated substrates and to deliver ubiquitinated proteins to the proteasome. Involved in nucleotide excision repair and is thought to be functional equivalent for RAD23B in global genome nucleotide excision repair (GG-NER) by association with XPC. In vitro, the XPC:RAD23A dimer has NER activity. Can stabilize XPC. In terms of biological role, (Microbial infection) Involved in Vpr-dependent replication of HIV-1 in non-proliferating cells and primary macrophages. Required for the association of HIV-1 Vpr with the host proteasome. This is UV excision repair protein RAD23 homolog A (RAD23A) from Homo sapiens (Human).